Reading from the N-terminus, the 277-residue chain is Phosphatidylglycerol--prolipoprotein diacylglyceryl transferase (277 aa).

Transmembrane regions (helical) follow at residues 18 to 38, 51 to 71, 89 to 109, and 116 to 136; these read ISVK…LLLA, IIVD…RIYY, IWHG…TAII, and ISFW…QAIG. Position 137 (R137) interacts with a 1,2-diacyl-sn-glycero-3-phospho-(1'-sn-glycerol). Transmembrane regions (helical) follow at residues 177-197, 205-225, and 235-255; these read QPTF…LLII, GELF…IEGM, and FRVS…IIIY.

Belongs to the Lgt family.

It localises to the cell membrane. The catalysed reaction is L-cysteinyl-[prolipoprotein] + a 1,2-diacyl-sn-glycero-3-phospho-(1'-sn-glycerol) = an S-1,2-diacyl-sn-glyceryl-L-cysteinyl-[prolipoprotein] + sn-glycerol 1-phosphate + H(+). It participates in protein modification; lipoprotein biosynthesis (diacylglyceryl transfer). In terms of biological role, catalyzes the transfer of the diacylglyceryl group from phosphatidylglycerol to the sulfhydryl group of the N-terminal cysteine of a prolipoprotein, the first step in the formation of mature lipoproteins. This chain is Phosphatidylglycerol--prolipoprotein diacylglyceryl transferase, found in Listeria monocytogenes serovar 1/2a (strain ATCC BAA-679 / EGD-e).